The primary structure comprises 805 residues: MGEIGGEELVLDVDETIFVAVAEDVERSKTTVLWAARNFSGKKICLLYVHRTARAASWTHKKLVGGSFKKHDVKVIERVEKPKVDELMNSYLQLLSETEIQTDKLCIAGQNIEECIVELIARHKIKWLVMGAASDKHYSWKMTDLKSKKAIFVCKKAPDSCHIWFLCKGYLIFTRASNDDSNNRQTMPPLVQLDSDNETRKSEKLESSYMRRRLRYWRSLLEQDGEKDTGQLEREKVEPRAPPLFSSGSSSSFGEPVGPEPVSPELVDSDTLNTSNVEEKEREGDVARKVHRYDKAMHDIGQSDRTVYGEAGKKWEEDASTTEALCKAKALEGLCIKESSQRKRLEELLEKEKLEVKMVIEQNNGFMKELQMVQGRNLKLESQMRKLQDLEKEHGEKFDTAMELLKSFRQKRDEIRIDHENAVKEVNALRRLVKGETGESSGSEMLDYSFMEINEATNEFDPSWKLGEGKYGSVYKGNLQHLQVAVKMLPSYGSLNHFEFERRVEILSRVRHPNLVTLMGACPESRSLIYQYIPNGSLEDCFSSENNVPALSWESRIRIASEICSALLFLHSNIPCIIHGNLKPSKILLDSNLVTKINDYGISQLIPIDGLDKSDPHVDPHYFVSREMTLESDIYAFGIILLQLLTRRPVSGILRDVKCALENDNISAVLDNSAGDWPVARGKKLANVAIRCCKKNPMNRPDLAVVLRFIDRMKAPEVPSSETSSYANQNVPRRPPSHYLCPIFQEVMKDPLIAADGFTYEAEAIREWLANGHDTSPMTNLKMEDCNLIPNHALHLAIQDWQNQW.

Disordered regions lie at residues 181 to 205 (SNNRQTMPPLVQLDSDNETRKSEKL) and 226 to 284 (EKDT…EREG). Residues 226 to 239 (EKDTGQLEREKVEP) are compositionally biased toward basic and acidic residues. Over residues 245-257 (FSSGSSSSFGEPV) the composition is skewed to low complexity. Residues 331-434 (LEGLCIKESS…EVNALRRLVK (104 aa)) are a coiled coil. The Protein kinase domain occupies 460-718 (FDPSWKLGEG…FIDRMKAPEV (259 aa)). Residues 466–474 (LGEGKYGSV) and Lys487 each bind ATP. One can recognise a U-box domain in the interval 734–805 (RPPSHYLCPI…LAIQDWQNQW (72 aa)).

Belongs to the protein kinase superfamily. Ser/Thr protein kinase family.

The catalysed reaction is S-ubiquitinyl-[E2 ubiquitin-conjugating enzyme]-L-cysteine + [acceptor protein]-L-lysine = [E2 ubiquitin-conjugating enzyme]-L-cysteine + N(6)-ubiquitinyl-[acceptor protein]-L-lysine.. It participates in protein modification; protein ubiquitination. Functions as an E3 ubiquitin ligase. The sequence is that of U-box domain-containing protein 32 (PUB32) from Arabidopsis thaliana (Mouse-ear cress).